The primary structure comprises 236 residues: Probable transcriptional regulatory protein UU295 (236 aa).

This sequence belongs to the TACO1 family.

The protein resides in the cytoplasm. In Ureaplasma parvum serovar 3 (strain ATCC 700970), this protein is Probable transcriptional regulatory protein UU295.